A 658-amino-acid chain; its full sequence is Pentatricopeptide repeat-containing protein 7, mitochondrial (658 aa).

A mitochondrion-targeting transit peptide spans 1-29; the sequence is MRNCVSPLLFAWTKHLRLREFKIPFPNRL. 2 PPR repeats span residues 130–164 and 220–254; these read VKKR…TPIW and LYVE…SESL.

The protein localises to the mitochondrion. Its function is as follows. Mitochondrial RNA-binding protein required for the stability of the atp6 mRNA. The chain is Pentatricopeptide repeat-containing protein 7, mitochondrial (ppr7) from Schizosaccharomyces pombe (strain 972 / ATCC 24843) (Fission yeast).